Consider the following 373-residue polypeptide: Chaperone protein DnaJ (373 aa).

The J domain occupies 5–69; sequence DYYEVLGVNK…NKRANYDQFG (65 aa). A CR-type zinc finger spans residues 130–212; it reads GTKKEISIKK…CKGKGTENKT (83 aa). Residues cysteine 143, cysteine 146, cysteine 160, cysteine 163, cysteine 186, cysteine 189, cysteine 200, and cysteine 203 each contribute to the Zn(2+) site. 4 CXXCXGXG motif repeats span residues 143-150, 160-167, 186-193, and 200-207; these read CHTCNGDG, CSYCNGAG, CPKCEGSG, and CPTCKGKG.

It belongs to the DnaJ family. Homodimer. The cofactor is Zn(2+).

It is found in the cytoplasm. Its function is as follows. Participates actively in the response to hyperosmotic and heat shock by preventing the aggregation of stress-denatured proteins and by disaggregating proteins, also in an autonomous, DnaK-independent fashion. Unfolded proteins bind initially to DnaJ; upon interaction with the DnaJ-bound protein, DnaK hydrolyzes its bound ATP, resulting in the formation of a stable complex. GrpE releases ADP from DnaK; ATP binding to DnaK triggers the release of the substrate protein, thus completing the reaction cycle. Several rounds of ATP-dependent interactions between DnaJ, DnaK and GrpE are required for fully efficient folding. Also involved, together with DnaK and GrpE, in the DNA replication of plasmids through activation of initiation proteins. This is Chaperone protein DnaJ from Staphylococcus epidermidis (strain ATCC 12228 / FDA PCI 1200).